The primary structure comprises 249 residues: MTHQPQQSPQFFLTAPSPCPYLEGQQERKVFTHLVGDKANEINDLLTQGGFRRSQNIAYRPACEVCRACISVRILAGEFEMTRNMRRVWSQNRDLIGRVHKAQPSTEQYALFRDYLDARHRSGGMSDMTVLDYAMMIEDTHVNTQIIEYRRRGPDSFMSAKGDGELIAVALTDVMADGLSMVYSFFSPHMQERSLGTYMILDHIERARAAGLPHVYLGYWVEGSRKMQYKIRFTPQEHLGPRGWQRFEG.

This sequence belongs to the R-transferase family. Bpt subfamily.

It localises to the cytoplasm. It carries out the reaction N-terminal L-glutamyl-[protein] + L-leucyl-tRNA(Leu) = N-terminal L-leucyl-L-glutamyl-[protein] + tRNA(Leu) + H(+). The catalysed reaction is N-terminal L-aspartyl-[protein] + L-leucyl-tRNA(Leu) = N-terminal L-leucyl-L-aspartyl-[protein] + tRNA(Leu) + H(+). In terms of biological role, functions in the N-end rule pathway of protein degradation where it conjugates Leu from its aminoacyl-tRNA to the N-termini of proteins containing an N-terminal aspartate or glutamate. The sequence is that of Aspartate/glutamate leucyltransferase from Brucella canis (strain ATCC 23365 / NCTC 10854 / RM-666).